The sequence spans 254 residues: Imidazole glycerol phosphate synthase subunit HisF (254 aa).

Catalysis depends on residues Asp-12 and Asp-131.

Belongs to the HisA/HisF family. In terms of assembly, heterodimer of HisH and HisF.

Its subcellular location is the cytoplasm. The enzyme catalyses 5-[(5-phospho-1-deoxy-D-ribulos-1-ylimino)methylamino]-1-(5-phospho-beta-D-ribosyl)imidazole-4-carboxamide + L-glutamine = D-erythro-1-(imidazol-4-yl)glycerol 3-phosphate + 5-amino-1-(5-phospho-beta-D-ribosyl)imidazole-4-carboxamide + L-glutamate + H(+). The protein operates within amino-acid biosynthesis; L-histidine biosynthesis; L-histidine from 5-phospho-alpha-D-ribose 1-diphosphate: step 5/9. Functionally, IGPS catalyzes the conversion of PRFAR and glutamine to IGP, AICAR and glutamate. The HisF subunit catalyzes the cyclization activity that produces IGP and AICAR from PRFAR using the ammonia provided by the HisH subunit. The protein is Imidazole glycerol phosphate synthase subunit HisF of Rhizorhabdus wittichii (strain DSM 6014 / CCUG 31198 / JCM 15750 / NBRC 105917 / EY 4224 / RW1) (Sphingomonas wittichii).